The following is a 638-amino-acid chain: 1-deoxy-D-xylulose-5-phosphate synthase (638 aa).

Thiamine diphosphate contacts are provided by residues histidine 71 and serine 112–alanine 114. Mg(2+) is bound at residue aspartate 144. Residues glycine 145 to alanine 146, asparagine 173, tyrosine 284, and glutamate 365 contribute to the thiamine diphosphate site. Asparagine 173 is a Mg(2+) binding site.

It belongs to the transketolase family. DXPS subfamily. In terms of assembly, homodimer. Mg(2+) serves as cofactor. Thiamine diphosphate is required as a cofactor.

The enzyme catalyses D-glyceraldehyde 3-phosphate + pyruvate + H(+) = 1-deoxy-D-xylulose 5-phosphate + CO2. The protein operates within metabolic intermediate biosynthesis; 1-deoxy-D-xylulose 5-phosphate biosynthesis; 1-deoxy-D-xylulose 5-phosphate from D-glyceraldehyde 3-phosphate and pyruvate: step 1/1. Functionally, catalyzes the acyloin condensation reaction between C atoms 2 and 3 of pyruvate and glyceraldehyde 3-phosphate to yield 1-deoxy-D-xylulose-5-phosphate (DXP). In Mycobacterium bovis (strain ATCC BAA-935 / AF2122/97), this protein is 1-deoxy-D-xylulose-5-phosphate synthase.